The sequence spans 88 residues: MAKVVVERVYSIRLRHKMKRYPRWLRAKKAAKYVRKFLSRHMKVEPENVKIDTAVNEKIWERGAEKPPTKIRVRAVKFDDGIVEVELA.

This sequence belongs to the eukaryotic ribosomal protein eL31 family.

The chain is Large ribosomal subunit protein eL31 (rpl31e) from Archaeoglobus fulgidus (strain ATCC 49558 / DSM 4304 / JCM 9628 / NBRC 100126 / VC-16).